A 655-amino-acid polypeptide reads, in one-letter code: Probable replication factor A 73 kDa subunit (655 aa).

The segment at 195 to 217 (NRAAAPEATRARAVPPPARRTAS) is disordered. Positions 196–207 (RAAAPEATRARA) are enriched in low complexity. A DNA-binding region (OB) is located at residues 236-326 (FKIHGMVSRK…TLRSDSIIEA (91 aa)). The C4-type zinc-finger motif lies at 518–539 (CASEGCQKKLVGENGDYRCEKC).

It belongs to the replication factor A protein 1 family. Component of the heterotrimeric canonical replication protein A complex (RPA).

It is found in the nucleus. Its function is as follows. As part of the heterotrimeric replication protein A complex (RPA/RP-A), binds and stabilizes single-stranded DNA intermediates, that form during DNA replication or upon DNA stress. It prevents their reannealing and in parallel, recruits and activates different proteins and complexes involved in DNA metabolism. Thereby, it plays an essential role both in DNA replication and the cellular response to DNA damage. This is Probable replication factor A 73 kDa subunit from Caenorhabditis elegans.